Reading from the N-terminus, the 111-residue chain is Large ribosomal subunit protein uL22 (111 aa).

It belongs to the universal ribosomal protein uL22 family. As to quaternary structure, part of the 50S ribosomal subunit.

This protein binds specifically to 23S rRNA; its binding is stimulated by other ribosomal proteins, e.g. L4, L17, and L20. It is important during the early stages of 50S assembly. It makes multiple contacts with different domains of the 23S rRNA in the assembled 50S subunit and ribosome. In terms of biological role, the globular domain of the protein is located near the polypeptide exit tunnel on the outside of the subunit, while an extended beta-hairpin is found that lines the wall of the exit tunnel in the center of the 70S ribosome. The chain is Large ribosomal subunit protein uL22 from Geobacter sulfurreducens (strain ATCC 51573 / DSM 12127 / PCA).